Consider the following 396-residue polypeptide: Lysophospholipid transporter LplT (396 aa).

Topologically, residues 1–17 (MSESVHTNTSLWSKGMK) are periplasmic. The helical transmembrane segment at 18–38 (AVIVAQFLSAFGDNALLFATL) threads the bilayer. The Cytoplasmic portion of the chain corresponds to 39–52 (ALLKAQFYPEWSQP). A helical transmembrane segment spans residues 53-73 (ILQMVFVGAYILLAPFVGQVA). The Periplasmic segment spans residues 74–90 (DSFAKGRVMMFANGLKL). Residues 91 to 111 (LGAASICFGINPFLGYTLVGV) form a helical membrane-spanning segment. The Cytoplasmic portion of the chain corresponds to 112–144 (GAAAYSPAKYGILGELTTGSKLVKANGLMEASA). The chain crosses the membrane as a helical span at residues 145–165 (IAAILLGSVAGGVLADWHVLV). Position 166 (Ala-166) is a topological domain, periplasmic. A helical transmembrane segment spans residues 167–187 (LAACALAYGGAVVANIYIPKL). The Cytoplasmic portion of the chain corresponds to 188–225 (AARPGQSWNLINMTRSFLNACTSLWCNGETRFSLVGAS). A helical transmembrane segment spans residues 226–246 (LFWGAGVTLRFLLVLWVPVAL). The Periplasmic portion of the chain corresponds to 247 to 255 (GITDNATPT). The helical transmembrane segment at 256-276 (YLNAMVAIGIVVGAGAAAKLV) threads the bilayer. Residues 277–279 (TLE) are Cytoplasmic-facing. Residues 280–300 (TVSRCMPAGILIGVVVLIFSL) form a helical membrane-spanning segment. At 301–303 (QHE) the chain is on the periplasmic side. Residues 304-324 (LLPAYALLMLIGVLGGFFVVP) form a helical membrane-spanning segment. The Cytoplasmic portion of the chain corresponds to 325–342 (LNALLQERGKKSVGAGNA). The chain crosses the membrane as a helical span at residues 343–363 (IAVQNLGENSAMLLMLGIYSL). Residues 364-365 (AV) are Periplasmic-facing. The chain crosses the membrane as a helical span at residues 366–386 (MVGIPVVPIGIGFGALFALAI). Residues 387–396 (TALWIWQRRH) are Cytoplasmic-facing.

The protein belongs to the major facilitator superfamily. LplT (TC 2.A.1.42) family.

It localises to the cell inner membrane. In terms of biological role, catalyzes the facilitated diffusion of 2-acyl-glycero-3-phosphoethanolamine (2-acyl-GPE) into the cell. The protein is Lysophospholipid transporter LplT of Shigella flexneri serotype 5b (strain 8401).